Reading from the N-terminus, the 80-residue chain is MSEVKVFEVRGTFRMGDEPRQPFTRQVPATSEEEALEKVYSDLGSEHGVSRMEIQIEEIREIDPSKVEDPILRRLLGVEE.

It belongs to the eukaryotic ribosomal protein eL20 family. Part of the 50S ribosomal subunit. Binds 23S rRNA.

The polypeptide is Large ribosomal subunit protein eL20 (Methanopyrus kandleri (strain AV19 / DSM 6324 / JCM 9639 / NBRC 100938)).